A 253-amino-acid polypeptide reads, in one-letter code: Sugar fermentation stimulation protein homolog (253 aa).

Belongs to the SfsA family.

The protein is Sugar fermentation stimulation protein homolog of Chromohalobacter salexigens (strain ATCC BAA-138 / DSM 3043 / CIP 106854 / NCIMB 13768 / 1H11).